A 356-amino-acid polypeptide reads, in one-letter code: Histidinol-phosphate aminotransferase (356 aa).

The residue at position 214 (Lys-214) is an N6-(pyridoxal phosphate)lysine.

Belongs to the class-II pyridoxal-phosphate-dependent aminotransferase family. Histidinol-phosphate aminotransferase subfamily. As to quaternary structure, homodimer. Pyridoxal 5'-phosphate is required as a cofactor.

It catalyses the reaction L-histidinol phosphate + 2-oxoglutarate = 3-(imidazol-4-yl)-2-oxopropyl phosphate + L-glutamate. It participates in amino-acid biosynthesis; L-histidine biosynthesis; L-histidine from 5-phospho-alpha-D-ribose 1-diphosphate: step 7/9. This is Histidinol-phosphate aminotransferase from Shigella boydii serotype 18 (strain CDC 3083-94 / BS512).